The sequence spans 308 residues: Lipoyl synthase (308 aa).

Positions 48, 53, 59, 74, 78, 81, and 287 each coordinate [4Fe-4S] cluster. The 218-residue stretch at 60-277 folds into the Radical SAM core domain; that stretch reads WSRHTATYLA…RSVGEALGLF (218 aa).

It belongs to the radical SAM superfamily. Lipoyl synthase family. The cofactor is [4Fe-4S] cluster.

It is found in the cytoplasm. It catalyses the reaction [[Fe-S] cluster scaffold protein carrying a second [4Fe-4S](2+) cluster] + N(6)-octanoyl-L-lysyl-[protein] + 2 oxidized [2Fe-2S]-[ferredoxin] + 2 S-adenosyl-L-methionine + 4 H(+) = [[Fe-S] cluster scaffold protein] + N(6)-[(R)-dihydrolipoyl]-L-lysyl-[protein] + 4 Fe(3+) + 2 hydrogen sulfide + 2 5'-deoxyadenosine + 2 L-methionine + 2 reduced [2Fe-2S]-[ferredoxin]. It functions in the pathway protein modification; protein lipoylation via endogenous pathway; protein N(6)-(lipoyl)lysine from octanoyl-[acyl-carrier-protein]: step 2/2. Functionally, catalyzes the radical-mediated insertion of two sulfur atoms into the C-6 and C-8 positions of the octanoyl moiety bound to the lipoyl domains of lipoate-dependent enzymes, thereby converting the octanoylated domains into lipoylated derivatives. This is Lipoyl synthase from Chlamydia muridarum (strain MoPn / Nigg).